Consider the following 248-residue polypeptide: NH(3)-dependent NAD(+) synthetase (248 aa).

Position 31–38 (Gly31–Ser38) interacts with ATP. Asp37 serves as a coordination point for Mg(2+). Residue Arg114 coordinates deamido-NAD(+). Thr134 lines the ATP pocket. Glu139 is a binding site for Mg(2+). Positions 147 and 154 each coordinate deamido-NAD(+). ATP is bound by residues Lys163 and Thr185. Residue His232–Lys233 coordinates deamido-NAD(+).

It belongs to the NAD synthetase family. As to quaternary structure, homodimer.

It carries out the reaction deamido-NAD(+) + NH4(+) + ATP = AMP + diphosphate + NAD(+) + H(+). It functions in the pathway cofactor biosynthesis; NAD(+) biosynthesis; NAD(+) from deamido-NAD(+) (ammonia route): step 1/1. In terms of biological role, catalyzes the ATP-dependent amidation of deamido-NAD to form NAD. Uses ammonia as a nitrogen source. The sequence is that of NH(3)-dependent NAD(+) synthetase from Mycoplasma pneumoniae (strain ATCC 29342 / M129 / Subtype 1) (Mycoplasmoides pneumoniae).